Here is a 756-residue protein sequence, read N- to C-terminus: Inhibitor of nuclear factor kappa-B kinase subunit beta (756 aa).

One can recognise a Protein kinase domain in the interval 15–300 (WEMKERLGTG…DPVYGPNGCF (286 aa)). Residues 21-29 (LGTGGFGNV) and lysine 44 contribute to the ATP site. Catalysis depends on aspartate 145, which acts as the Proton acceptor. Lysine 163 participates in a covalent cross-link: Glycyl lysine isopeptide (Lys-Gly) (interchain with G-Cter in ubiquitin). Serine 177 is subject to Phosphoserine; by TBK1 and PKC/PRKCZ. Cysteine 179 carries the S-nitrosocysteine modification. Serine 181 is modified (phosphoserine; by TBK1, PKC/PRKCZ and PDPK1). Position 191 is a hydroxyproline (proline 191). Residues 458–479 (LLRNNSCLSKMKNSMASMSQQL) are leucine-zipper. Residues serine 670, serine 672, serine 675, serine 682, serine 689, serine 697, serine 705, serine 733, and serine 740 each carry the phosphoserine; by autocatalysis modification. Positions 737-742 (LDWSWL) are NEMO-binding.

This sequence belongs to the protein kinase superfamily. Ser/Thr protein kinase family. I-kappa-B kinase subfamily. As to quaternary structure, component of the I-kappa-B-kinase (IKK) core complex consisting of CHUK, IKBKB and IKBKG; probably four alpha/CHUK-beta/IKBKB dimers are associated with four gamma/IKBKG subunits. The IKK core complex seems to associate with regulatory or adapter proteins to form a IKK-signalosome holo-complex. The IKK complex associates with TERF2IP/RAP1, leading to promote IKK-mediated phosphorylation of RELA/p65. Part of a complex composed of NCOA2, NCOA3, CHUK/IKKA, IKBKB, IKBKG and CREBBP. Part of a 70-90 kDa complex at least consisting of CHUK/IKKA, IKBKB, NFKBIA, RELA, ELP1 and MAP3K14. Found in a membrane raft complex, at least composed of BCL10, CARD11, DPP4 and IKBKB. Interacts with SQSTM1 through PRKCZ or PRKCI. Forms an NGF-induced complex with IKBKB, PRKCI and TRAF6. May interact with MAVS/IPS1. Interacts with NALP2. Interacts with TICAM1. Interacts with FAF1; the interaction disrupts the IKK complex formation. Interacts with ATM. Part of a ternary complex consisting of TANK, IKBKB and IKBKG. Interacts with NIBP; the interaction is direct. Interacts with ARRB1 and ARRB2. Interacts with TRIM21. Interacts with NLRC5; prevents IKBKB phosphorylation and kinase activity. Interacts with PDPK1. Interacts with EIF2AK2/PKR. The phosphorylated form interacts with PPM1A and PPM1B. Interacts with ZNF268; the interaction is further increased in a TNF-alpha-dependent manner. Interacts with IKBKE. Interacts with ZC3H12A. Interacts with AKAP13. Interacts with IFIT5; the interaction synergizes the recruitment of IKK to MAP3K7 and enhances IKK phosphorylation. Interacts with LRRC14; disrupts IKBKB-IKBKG interaction preventing I-kappa-B-kinase (IKK) core complex formation and leading to a decrease of IKBKB phosphorylation and NF-kappaB activation. Interacts with SASH1. Interacts with ARFIP2. Interacts with FKBP5. In terms of processing, upon cytokine stimulation, phosphorylated on Ser-177 and Ser-181 by MEKK1 and/or MAP3K14/NIK as well as TBK1 and PRKCZ; which enhances activity. Phosphorylated by MAP3K7/TAK1 in response to NOD1 and NOD2 signaling, promoting activation and phosphorylation of NF-kappa-B inhibitors, leading to NF-kappa-B activation. Once activated, autophosphorylates on the C-terminal serine cluster; which decreases activity and prevents prolonged activation of the inflammatory response. Phosphorylated by the IKK-related kinases TBK1 and IKBKE, which is associated with reduced CHUK/IKKA and IKBKB activity and NF-kappa-B-dependent gene transcription. Dephosphorylated at Ser-177 and Ser-181 by PPM1A and PPM1B. Ubiquitinated. Monoubiquitination involves TRIM21 that leads to inhibition of Tax-induced NF-kappa-B signaling. 'Ser-163' may not serve as a monoubiquitination site. Ubiquitination on 'Ser-163' may modulate phosphorylation on C-terminal serine residues. Post-translationally, hydroxylated by PHD1/EGLN2, loss of hydroxylation under hypoxic conditions results in activation of NF-kappa-B.

Its subcellular location is the cytoplasm. The protein resides in the nucleus. It localises to the membrane raft. The enzyme catalyses L-seryl-[I-kappa-B protein] + ATP = O-phospho-L-seryl-[I-kappa-B protein] + ADP + H(+). It catalyses the reaction L-seryl-[protein] + ATP = O-phospho-L-seryl-[protein] + ADP + H(+). The catalysed reaction is L-threonyl-[protein] + ATP = O-phospho-L-threonyl-[protein] + ADP + H(+). Its function is as follows. Serine kinase that plays an essential role in the NF-kappa-B signaling pathway which is activated by multiple stimuli such as inflammatory cytokines, bacterial or viral products, DNA damages or other cellular stresses. Acts as a part of the canonical IKK complex in the conventional pathway of NF-kappa-B activation. Phosphorylates inhibitors of NF-kappa-B on 2 critical serine residues. These modifications allow polyubiquitination of the inhibitors and subsequent degradation by the proteasome. In turn, free NF-kappa-B is translocated into the nucleus and activates the transcription of hundreds of genes involved in immune response, growth control, or protection against apoptosis. In addition to the NF-kappa-B inhibitors, phosphorylates several other components of the signaling pathway including NEMO/IKBKG, NF-kappa-B subunits RELA and NFKB1, as well as IKK-related kinases TBK1 and IKBKE. IKK-related kinase phosphorylations may prevent the overproduction of inflammatory mediators since they exert a negative regulation on canonical IKKs. Phosphorylates FOXO3, mediating the TNF-dependent inactivation of this pro-apoptotic transcription factor. Also phosphorylates other substrates including NAA10, NCOA3, BCL10 and IRS1. Phosphorylates RIPK1 at 'Ser-25' which represses its kinase activity and consequently prevents TNF-mediated RIPK1-dependent cell death. Phosphorylates the C-terminus of IRF5, stimulating IRF5 homodimerization and translocation into the nucleus. The chain is Inhibitor of nuclear factor kappa-B kinase subunit beta (IKBKB) from Bos taurus (Bovine).